Consider the following 364-residue polypeptide: Fructose-1,6-bisphosphatase class 1 2 (364 aa).

Mg(2+) is bound by residues Glu-101, Asp-123, Leu-125, and Asp-126. Substrate-binding positions include 126–129 and Asn-218; that span reads DGSS. Residue Glu-290 participates in Mg(2+) binding.

The protein belongs to the FBPase class 1 family. Homotetramer. The cofactor is Mg(2+).

The protein resides in the cytoplasm. The enzyme catalyses beta-D-fructose 1,6-bisphosphate + H2O = beta-D-fructose 6-phosphate + phosphate. It functions in the pathway carbohydrate biosynthesis; gluconeogenesis. This chain is Fructose-1,6-bisphosphatase class 1 2, found in Cupriavidus necator (strain ATCC 17699 / DSM 428 / KCTC 22496 / NCIMB 10442 / H16 / Stanier 337) (Ralstonia eutropha).